The chain runs to 100 residues: EKC/KEOPS complex subunit GON7 (100 aa).

Met1 is subject to N-acetylmethionine. Residues Ala61–Ser100 form a disordered region. Acidic residues predominate over residues Pro64–Asn81.

In terms of assembly, component of the EKC/KEOPS complex composed of at least GON7, TP53RK, TPRKB, OSGEP and LAGE3; the whole complex dimerizes.

The protein resides in the nucleus. Its function is as follows. Component of the EKC/KEOPS complex that is required for the formation of a threonylcarbamoyl group on adenosine at position 37 (t(6)A37) in tRNAs that read codons beginning with adenine. The complex is probably involved in the transfer of the threonylcarbamoyl moiety of threonylcarbamoyl-AMP (TC-AMP) to the N6 group of A37. GON7 plays a supporting role to the catalytic subunit OSGEP in the complex. The chain is EKC/KEOPS complex subunit GON7 from Homo sapiens (Human).